Consider the following 403-residue polypeptide: Aloesone synthase (403 aa).

Cys-174 is a catalytic residue. CoA contacts are provided by residues Ser-281 and 318 to 321 (GGRA).

Belongs to the thiolase-like superfamily. Chalcone/stilbene synthases family. In terms of assembly, homodimer.

It functions in the pathway secondary metabolite biosynthesis; flavonoid biosynthesis. Functionally, catalyzes the iterative condensations of 6, 7 or 8 molecules of malonyl-CoA to produce various aromatic polyketides. Produces the heptaketide aloesone, the aglycone of aloesin, from 7 molecules of malonyl-CoA as a major product. Also able to produce a hexaketide pyrone, a heptaketide 6-(2-acetyl-3,5-dihydroxybenzyl)-4-hydroxy-2-pyrone, a novel heptaketide 6-(2-(2,4-dihydroxy-6-methylphenyl)-2-oxoethyl)-4-hydroxy-2-pyrone and octaketides SEK4/SEK4b. This is Aloesone synthase (PKS3) from Aloe arborescens (Kidachi aloe).